Reading from the N-terminus, the 318-residue chain is tRNA-modifying protein YgfZ (318 aa).

Folate contacts are provided by tryptophan 24 and tryptophan 185.

The protein belongs to the tRNA-modifying YgfZ family.

It is found in the cytoplasm. Functionally, folate-binding protein involved in regulating the level of ATP-DnaA and in the modification of some tRNAs. It is probably a key factor in regulatory networks that act via tRNA modification, such as initiation of chromosomal replication. The protein is tRNA-modifying protein YgfZ of Buchnera aphidicola subsp. Baizongia pistaciae (strain Bp).